The primary structure comprises 355 residues: Biotin synthase (355 aa).

Positions 51–275 (NTVKVNYLVN…VCPDKEIRIA (225 aa)) constitute a Radical SAM core domain. Residues C66, C70, and C73 each contribute to the [4Fe-4S] cluster site. The [2Fe-2S] cluster site is built by C110, C143, C203, and R273.

It belongs to the radical SAM superfamily. Biotin synthase family. In terms of assembly, homodimer. It depends on [4Fe-4S] cluster as a cofactor. [2Fe-2S] cluster is required as a cofactor.

It catalyses the reaction (4R,5S)-dethiobiotin + (sulfur carrier)-SH + 2 reduced [2Fe-2S]-[ferredoxin] + 2 S-adenosyl-L-methionine = (sulfur carrier)-H + biotin + 2 5'-deoxyadenosine + 2 L-methionine + 2 oxidized [2Fe-2S]-[ferredoxin]. It functions in the pathway cofactor biosynthesis; biotin biosynthesis; biotin from 7,8-diaminononanoate: step 2/2. Its function is as follows. Catalyzes the conversion of dethiobiotin (DTB) to biotin by the insertion of a sulfur atom into dethiobiotin via a radical-based mechanism. The protein is Biotin synthase of Saccharopolyspora erythraea (strain ATCC 11635 / DSM 40517 / JCM 4748 / NBRC 13426 / NCIMB 8594 / NRRL 2338).